The primary structure comprises 839 residues: Protein translocase subunit SecA (839 aa).

ATP-binding positions include Gln85, 103–107, and Asp493; that span reads GEGKT. Residues 780-790 show a composition bias toward basic and acidic residues; it reads QIHEQERERAS. Residues 780-839 form a disordered region; the sequence is QIHEQERERASQRATTAAPQNIQSQQSANTDDLPKVERNEACPCGSGKKFKNCHGRKSFS. The segment covering 791-809 has biased composition (polar residues); it reads QRATTAAPQNIQSQQSANT. Zn(2+) contacts are provided by Cys821, Cys823, Cys832, and His833. The span at 827 to 839 shows a compositional bias: basic residues; that stretch reads KKFKNCHGRKSFS.

Belongs to the SecA family. In terms of assembly, monomer and homodimer. Part of the essential Sec protein translocation apparatus which comprises SecA, SecYEG and auxiliary proteins SecDF. Other proteins may also be involved. It depends on Zn(2+) as a cofactor.

It is found in the cell membrane. The protein localises to the cytoplasm. It carries out the reaction ATP + H2O + cellular proteinSide 1 = ADP + phosphate + cellular proteinSide 2.. Its function is as follows. Part of the Sec protein translocase complex. Interacts with the SecYEG preprotein conducting channel. Has a central role in coupling the hydrolysis of ATP to the transfer of proteins into and across the cell membrane, serving as an ATP-driven molecular motor driving the stepwise translocation of polypeptide chains across the membrane. The chain is Protein translocase subunit SecA from Streptococcus pyogenes serotype M6 (strain ATCC BAA-946 / MGAS10394).